A 77-amino-acid chain; its full sequence is Small ribosomal subunit protein bS18 (77 aa).

This sequence belongs to the bacterial ribosomal protein bS18 family. As to quaternary structure, part of the 30S ribosomal subunit. Forms a tight heterodimer with protein bS6.

In terms of biological role, binds as a heterodimer with protein bS6 to the central domain of the 16S rRNA, where it helps stabilize the platform of the 30S subunit. This is Small ribosomal subunit protein bS18 from Lactobacillus helveticus (strain DPC 4571).